We begin with the raw amino-acid sequence, 231 residues long: Orotate phosphoribosyltransferase (231 aa).

Residues K27, 79–80 (YK), R106, K107, K110, H112, and 133–141 (DDVMTAGTA) contribute to the 5-phospho-alpha-D-ribose 1-diphosphate site. The orotate site is built by T137 and R166.

The protein belongs to the purine/pyrimidine phosphoribosyltransferase family. PyrE subfamily. In terms of assembly, homodimer. Requires Mg(2+) as cofactor.

The enzyme catalyses orotidine 5'-phosphate + diphosphate = orotate + 5-phospho-alpha-D-ribose 1-diphosphate. It participates in pyrimidine metabolism; UMP biosynthesis via de novo pathway; UMP from orotate: step 1/2. Functionally, catalyzes the transfer of a ribosyl phosphate group from 5-phosphoribose 1-diphosphate to orotate, leading to the formation of orotidine monophosphate (OMP). The polypeptide is Orotate phosphoribosyltransferase (Bifidobacterium longum (strain NCC 2705)).